A 305-amino-acid polypeptide reads, in one-letter code: Heme A synthase (305 aa).

Topologically, residues 1–6 are cytoplasmic; that stretch reads MKKFLK. Residues 7-27 traverse the membrane as a helical segment; the sequence is VWSVLTIICMTVVVFGGALVT. The Extracellular segment spans residues 28-63; the sequence is KTGSADGCGNSWPLCNGQLVRLTDVTPEKLIEFMHR. An intrachain disulfide couples cysteine 35 to cysteine 42. Residue glutamate 59 is part of the active site. Heme o is bound at residue histidine 62. A helical transmembrane segment spans residues 64–84; that stretch reads MTTGISSIFVIVLAICAWIYM. At 85-92 the chain is on the cytoplasmic side; that stretch reads KNRRETKP. The chain crosses the membrane as a helical span at residues 93–113; it reads LAIIAVLFLIIQALMGMAAVV. Residues 114–122 are Extracellular-facing; that stretch reads WGQNPYIMA. Residues 123-143 form a helical membrane-spanning segment; it reads LHFGISIICYASIVLLALMIF. A heme o-binding site is contributed by histidine 124. The Cytoplasmic portion of the chain corresponds to 144–160; the sequence is EVDRKFDARNLVMGTKL. The chain crosses the membrane as a helical span at residues 161–181; that stretch reads RINIYALTIYTYLAVYTGALV. Residues 182–212 are Extracellular-facing; sequence RHEKASMAVPVWPFENGKFIMPDSVQDYVQY. A helical transmembrane segment spans residues 213 to 233; it reads FHRVAAFILIVWLLYVTWLVF. Histidine 214 provides a ligand contact to heme b. The Cytoplasmic portion of the chain corresponds to 234 to 240; it reads RDYRRYR. Residues 241-261 traverse the membrane as a helical segment; it reads VLTFSMVLSLLFIALQAVTGA. The Extracellular portion of the chain corresponds to 262–271; it reads LSVYTGVNLY. The chain crosses the membrane as a helical span at residues 272 to 292; sequence IALAHSLIITMLFALLCYLCL. Histidine 276 lines the heme b pocket. Residues 293–305 lie on the Cytoplasmic side of the membrane; it reads LASRSKSNRLRIK.

The protein belongs to the COX15/CtaA family. Type 1 subfamily. In terms of assembly, interacts with CtaB. Heme b serves as cofactor.

It is found in the cell membrane. The catalysed reaction is Fe(II)-heme o + 2 A + H2O = Fe(II)-heme a + 2 AH2. The protein operates within porphyrin-containing compound metabolism; heme A biosynthesis; heme A from heme O: step 1/1. Its function is as follows. Catalyzes the conversion of heme O to heme A by two successive hydroxylations of the methyl group at C8. The first hydroxylation forms heme I, the second hydroxylation results in an unstable dihydroxymethyl group, which spontaneously dehydrates, resulting in the formyl group of heme A. The protein is Heme A synthase of Listeria welshimeri serovar 6b (strain ATCC 35897 / DSM 20650 / CCUG 15529 / CIP 8149 / NCTC 11857 / SLCC 5334 / V8).